A 332-amino-acid chain; its full sequence is Ribosomal RNA small subunit methyltransferase H (332 aa).

S-adenosyl-L-methionine-binding positions include 42–44 (GGH), Asp-62, Phe-86, Asp-105, and Gln-112.

It belongs to the methyltransferase superfamily. RsmH family.

It is found in the cytoplasm. The catalysed reaction is cytidine(1402) in 16S rRNA + S-adenosyl-L-methionine = N(4)-methylcytidine(1402) in 16S rRNA + S-adenosyl-L-homocysteine + H(+). In terms of biological role, specifically methylates the N4 position of cytidine in position 1402 (C1402) of 16S rRNA. This is Ribosomal RNA small subunit methyltransferase H from Cupriavidus pinatubonensis (strain JMP 134 / LMG 1197) (Cupriavidus necator (strain JMP 134)).